The primary structure comprises 376 residues: MEEKGSRMVQQGNQEAAAAPDTMAQPYASAQFAPPQNGIPAEYTAPHPHPAPEYTGQTTVPEHTLNLYPPAQTHSEQSPADTNAQTVSGTATQTDDAAPTDGQPQTQPSENTENKSQPKRLHVSNIPFRFRDPDLRQMFGQFGKILDVEIIFNERGSKGFGFVTFENSADADRAREKLHGTVVEGRKIEVNNATARVMTNKKTVNPYTNGWKLNPVVGAVYSPEFYAGTVLLCQANQEGSSMYSAPSSLVYTSAMPGFPYPAATAAAAYRGAHLRGRGRTVYNTFRAAAPPPPIPAYGGVVYQDGFYGADIYGGYAAYRYAQPTPATAAAYSDRNQFVFVAADEISCNTSAVTDEFMLPTPTTTHLLQPPPTALVP.

Positions 1 to 126 (MEEKGSRMVQ…QPKRLHVSNI (126 aa)) are disordered. Residues 72-89 (QTHSEQSPADTNAQTVSG) are compositionally biased toward polar residues. The segment covering 90–101 (TATQTDDAAPTD) has biased composition (low complexity). The segment covering 102–115 (GQPQTQPSENTENK) has biased composition (polar residues). Residues 119-195 (KRLHVSNIPF…RKIEVNNATA (77 aa)) form the RRM domain. An Asymmetric dimethylarginine modification is found at Arg319.

As to quaternary structure, binds to the C-terminus of ATXN2.

The protein resides in the nucleus. It localises to the cytoplasm. Its function is as follows. RNA-binding protein that regulates alternative splicing events by binding to 5'-UGCAUGU-3' elements. Prevents binding of U2AF2 to the 3'-splice site. Regulates alternative splicing of tissue-specific exons and of differentially spliced exons during erythropoiesis. The protein is RNA binding protein fox-1 homolog 1 (RBFOX1) of Macaca fascicularis (Crab-eating macaque).